Here is a 555-residue protein sequence, read N- to C-terminus: Glucose-6-phosphate isomerase (555 aa).

E356 serves as the catalytic Proton donor. Catalysis depends on residues H387 and K515.

It belongs to the GPI family.

The protein resides in the cytoplasm. It carries out the reaction alpha-D-glucose 6-phosphate = beta-D-fructose 6-phosphate. It functions in the pathway carbohydrate biosynthesis; gluconeogenesis. Its pathway is carbohydrate degradation; glycolysis; D-glyceraldehyde 3-phosphate and glycerone phosphate from D-glucose: step 2/4. Its function is as follows. Catalyzes the reversible isomerization of glucose-6-phosphate to fructose-6-phosphate. This is Glucose-6-phosphate isomerase from Desulforapulum autotrophicum (strain ATCC 43914 / DSM 3382 / VKM B-1955 / HRM2) (Desulfobacterium autotrophicum).